The sequence spans 650 residues: Serine/threonine-protein phosphatase with EF-hands 1 (650 aa).

The region spanning 16-45 is the IQ domain; sequence VIKAALVIQNWYRRYRARLRVRQHYALAIF. The interval 124-456 is catalytic; that stretch reads IHILLQAFKQ…PQFFQYQVTS (333 aa). Residues Asp-175, His-177, Asp-204, and Asn-236 each coordinate Mn(2+). Catalysis depends on His-237, which acts as the Proton donor. Mn(2+) is bound at residue His-288. A disordered region spans residues 315 to 348; the sequence is PVLGNQETGEKRNKSASNYVEPRKVEPDKTPSED. A compositionally biased stretch (basic and acidic residues) spans 335–348; it reads EPRKVEPDKTPSED. Residue His-404 coordinates Mn(2+). 3 EF-hand domains span residues 484–519, 567–602, and 607–642; these read SRKT…ILGL, RYRS…FNAH, and IDDS…VHKY. The Ca(2+) site is built by Asp-497, Ser-499, Ser-501, Arg-503, Glu-508, Asp-580, Asp-582, Ser-584, Glu-591, Asp-620, Asn-622, Asp-624, Asn-626, and Glu-631.

It belongs to the PPP phosphatase family. Requires Mn(2+) as cofactor. Mg(2+) serves as cofactor. In terms of tissue distribution, in the embryo it is almost exclusively expressed in the peripheral nervous system, within sensory neurons of cranial and dorsal root ganglia. Otherwise found in fetal inner ear and a small group of neurons in the midbrain/pons junction.

The enzyme catalyses O-phospho-L-seryl-[protein] + H2O = L-seryl-[protein] + phosphate. It catalyses the reaction O-phospho-L-threonyl-[protein] + H2O = L-threonyl-[protein] + phosphate. Its activity is regulated as follows. Activated by calcium. Its function is as follows. May have a role in the recovery or adaptation response of photoreceptors. May have a role in diverse sensory neurons and in development. The polypeptide is Serine/threonine-protein phosphatase with EF-hands 1 (Ppef1) (Mus musculus (Mouse)).